The primary structure comprises 23 residues: Textile convulsant peptide (23 aa).

Cystine bridges form between Cys2/Cys10, Cys5/Cys15, and Cys9/Cys20. Position 23 is a proline amide; partial (Pro23).

The C-terminal amidation is described in Ref.1 and PubMed:23031820, but not in PubMed:22709442 and PubMed:36235146. In terms of processing, ju et al. (2022) describe a disulfide connectivity (C55-C61; C56-C69; C66-C68) that differs for the usual one. In terms of tissue distribution, expressed by the venom duct. Is present in all duct parts with a highest content in part 2 (proximal of the venom bulb) and then decreases in concentration toward the end of the duct.

It localises to the secreted. Causes convulsions mice. In Conus textile (Cloth-of-gold cone), this protein is Textile convulsant peptide.